Consider the following 82-residue polypeptide: U6 snRNA-associated Sm-like protein LSm6 (82 aa).

The region spanning 13–82 (DPSGFLSEII…GNNVMYISAD (70 aa)) is the Sm domain.

This sequence belongs to the snRNP Sm proteins family. SmF/LSm6 subfamily. Component of the heptameric LSM1-LSM7 complex, which consists of snr-1/lsm1, snr-2/lsm2, snr-3/lsm3, snr-4/lsm4, snr-5/lsm5, snr-6/lsm6 and snr-7/lsm7. Component of the heptameric LSM2-LSM8 complex, which consists of snr-2/lsm2, snr-3/lsm3, snr-4/lsm4, snr-5/lsm5, snr-6/lsm6, snr-7/lsm7 and snr-8/lsm8. The LSm subunits form a seven-membered ring structure with a doughnut shape.

The protein localises to the cytoplasm. It is found in the nucleus. Functionally, component of LSm protein complexes, which are involved in RNA processing and may function in a chaperone-like manner, facilitating the efficient association of RNA processing factors with their substrates. Component of the cytoplasmic LSM1-LSM7 complex, which is thought to be involved in mRNA degradation by activating the decapping step in the 5'-to-3' mRNA decay pathway. Component of the nuclear LSM2-LSM8 complex, which is involved in splicing of nuclear mRNAs. LSM2-LSM8 associates with multiple snRNP complexes containing the U6 snRNA (U4/U6 di-snRNP, spliceosomal U4/U6.U5 tri-snRNP, and free U6 snRNP). It binds directly to the 3'-terminal U-tract of U6 snRNA and plays a role in the biogenesis and stability of the U6 snRNP and U4/U6 snRNP complexes. LSM2-LSM8 probably also is involved degradation of nuclear pre-mRNA by targeting them for decapping, and in processing of pre-tRNAs, pre-rRNAs and U3 snoRNA. The polypeptide is U6 snRNA-associated Sm-like protein LSm6 (snr-6) (Neurospora crassa (strain ATCC 24698 / 74-OR23-1A / CBS 708.71 / DSM 1257 / FGSC 987)).